Consider the following 217-residue polypeptide: Probable GTP-binding protein EngB (217 aa).

Residues 24–207 (SQPEICFAGR…HELIESWLIP (184 aa)) enclose the EngB-type G domain. Residues 32 to 39 (GRSNAGKS), 59 to 63 (GRTQH), 81 to 84 (DLPG), 148 to 151 (TKCD), and 185 to 188 (LFSA) contribute to the GTP site. S39 and T61 together coordinate Mg(2+).

Belongs to the TRAFAC class TrmE-Era-EngA-EngB-Septin-like GTPase superfamily. EngB GTPase family. The cofactor is Mg(2+).

In terms of biological role, necessary for normal cell division and for the maintenance of normal septation. The protein is Probable GTP-binding protein EngB of Paraburkholderia phytofirmans (strain DSM 17436 / LMG 22146 / PsJN) (Burkholderia phytofirmans).